Reading from the N-terminus, the 261-residue chain is V-type proton ATPase subunit D (261 aa).

Ser241 carries the post-translational modification Phosphoserine.

The protein belongs to the V-ATPase D subunit family. As to quaternary structure, V-ATPase is a heteromultimeric enzyme composed of a peripheral catalytic V1 complex (components A to H) attached to an integral membrane V0 proton pore complex (components: a, c, c'', d and e).

It localises to the vacuole membrane. Its function is as follows. Subunit of the peripheral V1 complex of vacuolar ATPase. V-ATPase is responsible for acidifying a variety of intracellular compartments in eukaryotic cells, thus providing most of the energy required for transport processes in the vacuolar system. The sequence is that of V-type proton ATPase subunit D (VHA-D) from Arabidopsis thaliana (Mouse-ear cress).